Here is a 244-residue protein sequence, read N- to C-terminus: INO80 complex subunit E (244 aa).

Residues 10–54 (DYKKKYRNLKRKLKFLIYEHECFQEELRKAQRKLLKVSRDKSFLL) adopt a coiled-coil conformation. The disordered stretch occupies residues 63–236 (VDEDSSDSDA…SGDDALDGDD (174 aa)). Positions 99–115 (PPLGGAPSPSSLSLPPS) are enriched in low complexity. The segment covering 157–171 (RPKREKRPRLPRKLK) has biased composition (basic residues). Residues Lys159 and Lys171 each participate in a glycyl lysine isopeptide (Lys-Gly) (interchain with G-Cter in SUMO2) cross-link. Over residues 202–212 (PLPPPKMPPPT) the composition is skewed to pro residues.

Component of the chromatin remodeling INO80 complex; specifically part of a complex module associated with the N-terminus of INO80.

The protein resides in the nucleus. Functionally, putative regulatory component of the chromatin remodeling INO80 complex which is involved in transcriptional regulation, DNA replication and probably DNA repair. This Homo sapiens (Human) protein is INO80 complex subunit E (INO80E).